The primary structure comprises 1033 residues: Potassium-transporting ATPase alpha chain 1 (1033 aa).

Residues M1–P96 lie on the Cytoplasmic side of the membrane. Phosphotyrosine is present on residues Y6 and Y9. Residues G14–E39 are disordered. A compositionally biased stretch (basic residues) spans M25–K38. Phosphoserine is present on S26. The chain crosses the membrane as a helical span at residues E97 to A117. Residues A118–Y140 are Lumenal-facing. Residues L141–F161 form a helical membrane-spanning segment. Over K162–I297 the chain is Cytoplasmic. The chain crosses the membrane as a helical span at residues E298 to V317. At V318–A329 the chain is on the lumenal side. The helical transmembrane segment at M330–A347 threads the bilayer. V338, A339, V341, and E343 together coordinate K(+). Topologically, residues T348–L781 are cytoplasmic. The active-site 4-aspartylphosphate intermediate is the D385. Residues D385 and T387 each coordinate Mg(2+). Phosphoserine occurs at positions 461 and 599. 2 residues coordinate Mg(2+): D726 and D730. Residues K782–I801 form a helical membrane-spanning segment. Position 795 (E795) interacts with K(+). At Y802–L811 the chain is on the lumenal side. The helical transmembrane segment at G812–A832 threads the bilayer. A K(+)-binding site is contributed by E820. Over Y833–R852 the chain is Cytoplasmic. S838 carries the post-translational modification Phosphoserine. Residues L853–F875 traverse the membrane as a helical segment. At A876 to C927 the chain is on the lumenal side. The helical transmembrane segment at Y928–K947 threads the bilayer. Over T948 to N961 the chain is Cytoplasmic. At S952 the chain carries Phosphoserine; by PKA. A helical transmembrane segment spans residues R962–Y980. Topologically, residues C981–F995 are lumenal. A helical transmembrane segment spans residues Q996 to K1016. Topologically, residues L1017–Y1033 are cytoplasmic.

The protein belongs to the cation transport ATPase (P-type) (TC 3.A.3) family. Type IIC subfamily. The gastric H(+)/K(+) ATPase pump is composed of the catalytic alpha subunit ATP4A and the regulatory beta subunit ATP4B. Interacts (via the P-domain) with ATP4B (via N-terminus); this interaction stabilizes the lumenal-open E2 conformation state and prevents the reverse reaction of the transport cycle.

The protein resides in the apical cell membrane. It catalyses the reaction K(+)(out) + ATP + H2O + H(+)(in) = K(+)(in) + ADP + phosphate + 2 H(+)(out). Functionally, the catalytic subunit of the gastric H(+)/K(+) ATPase pump which transports H(+) ions in exchange for K(+) ions across the apical membrane of parietal cells. Uses ATP as an energy source to pump H(+) ions to the gastric lumen while transporting K(+) ion from the lumen into the cell. Remarkably generates a million-fold proton gradient across the gastric parietal cell membrane, acidifying the gastric juice down to pH 1. Within a transport cycle, the transfer of a H(+) ion across the membrane is coupled to ATP hydrolysis and is associated with a transient phosphorylation that shifts the pump conformation from inward-facing (E1) to outward-facing state (E2). The release of the H(+) ion in the stomach lumen is followed by binding of K(+) ion converting the pump conformation back to the E1 state. The sequence is that of Potassium-transporting ATPase alpha chain 1 (Atp4a) from Rattus norvegicus (Rat).